The sequence spans 413 residues: MSTTISPLAPKKYPKMPVIEGVRIATAEAGIKYKNRTDLLAMVFDAGTAVAGVFTKSKCPSAPVDFCRQNLAAGKARVLVVNSGNANAFTGKKGRESTALTGEAAAKAAGCTAGEVFLASTGVIGEPLDTTKFSHLLAGLVSDGKPDLWTEAAKAIMTTDTYPKVATQTVKLGDTDVTINGISKGAGMIAPDMATMLSFIATDAPIAAPVLQDLLSRGTAKTFNAVTVDSDTSTSDTLLIFATGKAAKRGAPEITDPKDARLGQFRRALGKVLKSLALQVVRDGEGARKQVEVTVTGAKSARSAKRIALSIANSPLVKTAVAGEDANWGRVVMAVGKAGEPADRDRLSIWFGDIRLAHEGERDPGYSEEATSTYMKRDDIRIRADIGIGRGKATVWTCDLTKEYVAINGDYRS.

T158, K184, T195, E285, N408, and S413 together coordinate substrate. The active-site Nucleophile is the T195.

This sequence belongs to the ArgJ family. In terms of assembly, heterotetramer of two alpha and two beta chains.

Its subcellular location is the cytoplasm. The catalysed reaction is N(2)-acetyl-L-ornithine + L-glutamate = N-acetyl-L-glutamate + L-ornithine. The enzyme catalyses L-glutamate + acetyl-CoA = N-acetyl-L-glutamate + CoA + H(+). The protein operates within amino-acid biosynthesis; L-arginine biosynthesis; L-ornithine and N-acetyl-L-glutamate from L-glutamate and N(2)-acetyl-L-ornithine (cyclic): step 1/1. Its pathway is amino-acid biosynthesis; L-arginine biosynthesis; N(2)-acetyl-L-ornithine from L-glutamate: step 1/4. Its function is as follows. Catalyzes two activities which are involved in the cyclic version of arginine biosynthesis: the synthesis of N-acetylglutamate from glutamate and acetyl-CoA as the acetyl donor, and of ornithine by transacetylation between N(2)-acetylornithine and glutamate. The sequence is that of Arginine biosynthesis bifunctional protein ArgJ from Mesorhizobium japonicum (strain LMG 29417 / CECT 9101 / MAFF 303099) (Mesorhizobium loti (strain MAFF 303099)).